The primary structure comprises 313 residues: Probable cell division protein WhiA (313 aa).

A DNA-binding region (H-T-H motif) is located at residues 277–311 (SLKEVAAQVPDGPISKSGVNHRFQKIREIAKQLKE).

Belongs to the WhiA family.

Functionally, involved in cell division and chromosome segregation. The sequence is that of Probable cell division protein WhiA from Lactobacillus johnsonii (strain CNCM I-12250 / La1 / NCC 533).